Reading from the N-terminus, the 388-residue chain is Chorismate synthase (388 aa).

The NADP(+) site is built by Arg39 and Arg45. Residues Arg130–Ser132, Asn251–Ala252, Gly296, Lys311–Thr315, and Arg337 each bind FMN.

The protein belongs to the chorismate synthase family. In terms of assembly, homotetramer. The cofactor is FMNH2.

The catalysed reaction is 5-O-(1-carboxyvinyl)-3-phosphoshikimate = chorismate + phosphate. Its pathway is metabolic intermediate biosynthesis; chorismate biosynthesis; chorismate from D-erythrose 4-phosphate and phosphoenolpyruvate: step 7/7. In terms of biological role, catalyzes the anti-1,4-elimination of the C-3 phosphate and the C-6 proR hydrogen from 5-enolpyruvylshikimate-3-phosphate (EPSP) to yield chorismate, which is the branch point compound that serves as the starting substrate for the three terminal pathways of aromatic amino acid biosynthesis. This reaction introduces a second double bond into the aromatic ring system. The polypeptide is Chorismate synthase (Lactococcus lactis subsp. cremoris (strain MG1363)).